A 61-amino-acid chain; its full sequence is Probable tautomerase spyM18_1099 (61 aa).

P2 acts as the Proton acceptor; via imino nitrogen in catalysis.

This sequence belongs to the 4-oxalocrotonate tautomerase family.

In Streptococcus pyogenes serotype M18 (strain MGAS8232), this protein is Probable tautomerase spyM18_1099.